The following is a 466-amino-acid chain: Ribulose bisphosphate carboxylase large chain (466 aa).

N6,N6,N6-trimethyllysine is present on lysine 5. The substrate site is built by asparagine 114 and threonine 164. Lysine 166 serves as the catalytic Proton acceptor. Residue lysine 168 coordinates substrate. Residues lysine 192, aspartate 194, and glutamate 195 each contribute to the Mg(2+) site. Residue lysine 192 is modified to N6-carboxylysine. Histidine 285 functions as the Proton acceptor in the catalytic mechanism. Residues arginine 286, histidine 318, and serine 370 each contribute to the substrate site.

It belongs to the RuBisCO large chain family. Type I subfamily. As to quaternary structure, heterohexadecamer of 8 large chains and 8 small chains; disulfide-linked. The disulfide link is formed within the large subunit homodimers. Mg(2+) serves as cofactor. The disulfide bond which can form in the large chain dimeric partners within the hexadecamer appears to be associated with oxidative stress and protein turnover.

The protein resides in the plastid. It localises to the chloroplast. The enzyme catalyses 2 (2R)-3-phosphoglycerate + 2 H(+) = D-ribulose 1,5-bisphosphate + CO2 + H2O. It catalyses the reaction D-ribulose 1,5-bisphosphate + O2 = 2-phosphoglycolate + (2R)-3-phosphoglycerate + 2 H(+). RuBisCO catalyzes two reactions: the carboxylation of D-ribulose 1,5-bisphosphate, the primary event in carbon dioxide fixation, as well as the oxidative fragmentation of the pentose substrate in the photorespiration process. Both reactions occur simultaneously and in competition at the same active site. The chain is Ribulose bisphosphate carboxylase large chain from Adenium obesum (Desert rose).